Consider the following 316-residue polypeptide: Aspartate carbamoyltransferase catalytic subunit (316 aa).

Positions 60 and 61 each coordinate carbamoyl phosphate. Lysine 88 serves as a coordination point for L-aspartate. Carbamoyl phosphate is bound by residues arginine 110, histidine 138, and glutamine 141. Positions 171 and 225 each coordinate L-aspartate. Carbamoyl phosphate-binding residues include glycine 266 and proline 267.

The protein belongs to the aspartate/ornithine carbamoyltransferase superfamily. ATCase family. Heterododecamer (2C3:3R2) of six catalytic PyrB chains organized as two trimers (C3), and six regulatory PyrI chains organized as three dimers (R2).

The enzyme catalyses carbamoyl phosphate + L-aspartate = N-carbamoyl-L-aspartate + phosphate + H(+). It functions in the pathway pyrimidine metabolism; UMP biosynthesis via de novo pathway; (S)-dihydroorotate from bicarbonate: step 2/3. Catalyzes the condensation of carbamoyl phosphate and aspartate to form carbamoyl aspartate and inorganic phosphate, the committed step in the de novo pyrimidine nucleotide biosynthesis pathway. The sequence is that of Aspartate carbamoyltransferase catalytic subunit from Rhizorhabdus wittichii (strain DSM 6014 / CCUG 31198 / JCM 15750 / NBRC 105917 / EY 4224 / RW1) (Sphingomonas wittichii).